The chain runs to 389 residues: RHOMBOID-like protein 1 (389 aa).

A run of 7 helical transmembrane segments spans residues 56-76 (PWLV…SMFI), 136-156 (IWLH…IFIG), 163-183 (FGFV…SLLS), 191-211 (ISVG…SELL), 221-241 (FAAL…GILP), 244-264 (DNFA…VFLI), and 295-315 (VLWI…LVVL). The Nucleophile role is filled by serine 196. The active-site Charge relay system is histidine 248.

The protein belongs to the peptidase S54 family. As to expression, expressed in roots, seedlings, leaves, stems and flowers.

Its subcellular location is the golgi apparatus membrane. The catalysed reaction is Cleaves type-1 transmembrane domains using a catalytic dyad composed of serine and histidine that are contributed by different transmembrane domains.. Functionally, probable rhomboid-type serine protease that catalyzes intramembrane proteolysis. Unable to cleave the Drosophila protein Spitz. The chain is RHOMBOID-like protein 1 from Arabidopsis thaliana (Mouse-ear cress).